The chain runs to 846 residues: Penicillin G acylase (846 aa).

A signal peptide spans 1–26; that stretch reads MKNRNRMIVNCVTASLMYYWSLPALA. Glu-178 contributes to the Ca(2+) binding site. The propeptide at 236–289 is spacer peptide; that stretch reads ALLPRYDLPAPMLDRPAKGADGALLALTAGKNRETIAAQFAQGGANGLAGYPTT. Ser-290 functions as the Nucleophile in the catalytic mechanism. 5 residues coordinate Ca(2+): Asp-362, Val-364, Asp-365, Pro-494, and Asp-541.

It belongs to the peptidase S45 family. Heterodimer of an alpha subunit and a beta subunit processed from the same precursor. Ca(2+) is required as a cofactor.

It is found in the periplasm. It catalyses the reaction a penicillin + H2O = 6-aminopenicillanate + a carboxylate. The sequence is that of Penicillin G acylase (pac) from Escherichia coli.